We begin with the raw amino-acid sequence, 252 residues long: Hydroxyacylglutathione hydrolase (252 aa).

Zn(2+) is bound by residues His54, His56, Asp58, His59, His111, Asp128, and His166.

It belongs to the metallo-beta-lactamase superfamily. Glyoxalase II family. Monomer. The cofactor is Zn(2+).

It carries out the reaction an S-(2-hydroxyacyl)glutathione + H2O = a 2-hydroxy carboxylate + glutathione + H(+). The protein operates within secondary metabolite metabolism; methylglyoxal degradation; (R)-lactate from methylglyoxal: step 2/2. In terms of biological role, thiolesterase that catalyzes the hydrolysis of S-D-lactoyl-glutathione to form glutathione and D-lactic acid. The chain is Hydroxyacylglutathione hydrolase from Vibrio cholerae serotype O1 (strain ATCC 39541 / Classical Ogawa 395 / O395).